A 49-amino-acid polypeptide reads, in one-letter code: Large ribosomal subunit protein bL33B (49 aa).

It belongs to the bacterial ribosomal protein bL33 family.

The protein is Large ribosomal subunit protein bL33B (rpmGB) of Bacillus licheniformis.